Reading from the N-terminus, the 349-residue chain is Aminomethyltransferase (349 aa).

Belongs to the GcvT family. In terms of assembly, the glycine cleavage system is composed of four proteins: P, T, L and H.

It carries out the reaction N(6)-[(R)-S(8)-aminomethyldihydrolipoyl]-L-lysyl-[protein] + (6S)-5,6,7,8-tetrahydrofolate = N(6)-[(R)-dihydrolipoyl]-L-lysyl-[protein] + (6R)-5,10-methylene-5,6,7,8-tetrahydrofolate + NH4(+). In terms of biological role, the glycine cleavage system catalyzes the degradation of glycine. This chain is Aminomethyltransferase, found in Thermus thermophilus (strain ATCC BAA-163 / DSM 7039 / HB27).